Here is a 732-residue protein sequence, read N- to C-terminus: Aldehyde oxidoreductase molybdenum-binding subunit PaoC (732 aa).

Mo-molybdopterin cytosine dinucleotide is bound by residues 241-242 (GF), 468-470 (IGT), 511-512 (GA), 615-621 (RILNPKT), Q625, and 688-691 (KGVG). The active-site Proton acceptor is E692.

The protein belongs to the xanthine dehydrogenase family. In terms of assembly, heterotrimer composed of PaoA, PaoB and PaoC. The cofactor is Mo-molybdopterin cytosine dinucleotide.

The protein resides in the periplasm. The catalysed reaction is an aldehyde + A + H2O = a carboxylate + AH2 + H(+). With respect to regulation, the complex requires PaoD for activity. In terms of biological role, oxidizes aldehydes to the corresponding carboxylic acids with a preference for aromatic aldehydes. It might play a role in the detoxification of aldehydes to avoid cell damage. In Escherichia coli (strain K12), this protein is Aldehyde oxidoreductase molybdenum-binding subunit PaoC.